A 433-amino-acid chain; its full sequence is Glutamate-1-semialdehyde 2,1-aminomutase (433 aa).

An N6-(pyridoxal phosphate)lysine modification is found at K271.

Belongs to the class-III pyridoxal-phosphate-dependent aminotransferase family. HemL subfamily. Homodimer. It depends on pyridoxal 5'-phosphate as a cofactor.

The protein resides in the cytoplasm. It carries out the reaction (S)-4-amino-5-oxopentanoate = 5-aminolevulinate. The protein operates within porphyrin-containing compound metabolism; protoporphyrin-IX biosynthesis; 5-aminolevulinate from L-glutamyl-tRNA(Glu): step 2/2. It functions in the pathway porphyrin-containing compound metabolism; chlorophyll biosynthesis. The protein is Glutamate-1-semialdehyde 2,1-aminomutase of Prochlorococcus marinus (strain AS9601).